The chain runs to 441 residues: MQVSIETTSGLERRLTVGIPAEIIDQEVEKRLKQAAKTVRINGFRKGKVPFKVVKQRFGEGVRQEVLGDTIQRSFYDAVRQESVRPAGQPSIEPKQMDEGKDVEYIATFEVYPEVELKELDNIEITRYDAEITDADIDKMVETLQKGQSSWEPVKRKSKKGDKVTIDFLGKIDGEAFDGGEAKGHQLELGSGSMIPGFEKGITGMKAGETQPINVTFPDDYHVEDLRSKDAEFEITVHEVLGEKLPKLDEEFYAKFGVTEGGEEKFREEVKSNMEREKQRAIKAKVKEQVMNALLESNSVDLPAALVQSEIGAMRQQMVQQYGQSAQNLDLQALLPDDMFKAQAERRTALALIVSEVVKKYEVKADKDIVRSLIEEAASTYEDPQEVINYYYSNEQLLANVEAAALEEKVVELLLEKATVTDATVSYDEVIKPQEPQAEEA.

Positions Gly161–Pro246 constitute a PPIase FKBP-type domain.

The protein belongs to the FKBP-type PPIase family. Tig subfamily.

It is found in the cytoplasm. The enzyme catalyses [protein]-peptidylproline (omega=180) = [protein]-peptidylproline (omega=0). Involved in protein export. Acts as a chaperone by maintaining the newly synthesized protein in an open conformation. Functions as a peptidyl-prolyl cis-trans isomerase. This is Trigger factor from Teredinibacter turnerae (strain ATCC 39867 / T7901).